The following is a 418-amino-acid chain: Sprouty-related, EVH1 domain-containing protein 2 (418 aa).

The WH1 domain maps to 5-122; the sequence is THPDDDSYIV…RGVRKAIEDL (118 aa). The interval 127 to 171 is disordered; sequence TTSSSTIHNEAELGDDDVFTTATDSSSNSSQKREQPTRTISSPTS. Residues 146-156 show a composition bias toward polar residues; the sequence is TTATDSSSNSS. The region spanning 201-257 is the KBD domain; sequence PYRQVSFPDDDEEIVRINPREKIWMTGYEDYRHAPVRGKYPDPSEDADSSYVRFAKG. Position 206 is a phosphoserine (Ser206). Residues Tyr228 and Tyr231 each carry the phosphotyrosine modification. The disordered stretch occupies residues 275-302; it reads GLGEDPKGRGGSVIKTQPSRGKSRRRKE. The region spanning 308–416 is the SPR domain; that stretch reads RCVYCRDMFN…CRCCGGKHKA (109 aa).

In terms of assembly, homodimer and heterodimer. Able to interact with SPRED1 to form heterodimers. Interacts with RAS. May interact with ZDHHC13 (via ANK repeats) and ZDHHC17 (via ANK repeats). Interacts with TESK1. Interacts with NF1. In terms of processing, phosphorylated on serine and threonine residues. Phosphorylated on tyrosine. Phosphorylation of Tyr-228 and Tyr-231 are required for ubiquitination. Ubiquitinated; leading to degradation by the proteasome. Expressed in liver, skin, small intestine, salivary gland and prostate.

The protein resides in the cell membrane. Its subcellular location is the cytoplasmic vesicle. It localises to the secretory vesicle membrane. The protein localises to the cytoplasm. In terms of biological role, negatively regulates Ras signaling pathways and downstream activation of MAP kinases. Recruits and translocates NF1 to the cell membrane, thereby enabling NF1-dependent hydrolysis of active GTP-bound Ras to inactive GDP-bound Ras. Inhibits fibroblast growth factor (FGF)-induced retinal lens fiber differentiation, probably by inhibiting FGF-mediated phosphorylation of ERK1/2. Inhibits TGFB-induced epithelial-to-mesenchymal transition in lens epithelial cells. In Homo sapiens (Human), this protein is Sprouty-related, EVH1 domain-containing protein 2 (SPRED2).